The primary structure comprises 67 residues: Large ribosomal subunit protein bL35 (67 aa).

Belongs to the bacterial ribosomal protein bL35 family.

In Novosphingobium aromaticivorans (strain ATCC 700278 / DSM 12444 / CCUG 56034 / CIP 105152 / NBRC 16084 / F199), this protein is Large ribosomal subunit protein bL35.